Here is a 242-residue protein sequence, read N- to C-terminus: DNA repair protein RecO (242 aa).

This sequence belongs to the RecO family.

Its function is as follows. Involved in DNA repair and RecF pathway recombination. This is DNA repair protein RecO from Wolbachia pipientis subsp. Culex pipiens (strain wPip).